Reading from the N-terminus, the 403-residue chain is Phosphopentomutase (403 aa).

The Mn(2+) site is built by aspartate 13, aspartate 298, histidine 303, aspartate 339, histidine 340, and histidine 351.

This sequence belongs to the phosphopentomutase family. The cofactor is Mn(2+).

It localises to the cytoplasm. It carries out the reaction 2-deoxy-alpha-D-ribose 1-phosphate = 2-deoxy-D-ribose 5-phosphate. The catalysed reaction is alpha-D-ribose 1-phosphate = D-ribose 5-phosphate. It functions in the pathway carbohydrate degradation; 2-deoxy-D-ribose 1-phosphate degradation; D-glyceraldehyde 3-phosphate and acetaldehyde from 2-deoxy-alpha-D-ribose 1-phosphate: step 1/2. Isomerase that catalyzes the conversion of deoxy-ribose 1-phosphate (dRib-1-P) and ribose 1-phosphate (Rib-1-P) to deoxy-ribose 5-phosphate (dRib-5-P) and ribose 5-phosphate (Rib-5-P), respectively. The protein is Phosphopentomutase of Streptococcus gordonii (strain Challis / ATCC 35105 / BCRC 15272 / CH1 / DL1 / V288).